A 364-amino-acid chain; its full sequence is Chorismate synthase (364 aa).

2 residues coordinate NADP(+): R48 and R54. Residues 130–132, 242–243, G287, 302–306, and R328 contribute to the FMN site; these read RSS, NA, and KPTSS.

The protein belongs to the chorismate synthase family. As to quaternary structure, homotetramer. It depends on FMNH2 as a cofactor.

The catalysed reaction is 5-O-(1-carboxyvinyl)-3-phosphoshikimate = chorismate + phosphate. Its pathway is metabolic intermediate biosynthesis; chorismate biosynthesis; chorismate from D-erythrose 4-phosphate and phosphoenolpyruvate: step 7/7. Catalyzes the anti-1,4-elimination of the C-3 phosphate and the C-6 proR hydrogen from 5-enolpyruvylshikimate-3-phosphate (EPSP) to yield chorismate, which is the branch point compound that serves as the starting substrate for the three terminal pathways of aromatic amino acid biosynthesis. This reaction introduces a second double bond into the aromatic ring system. This is Chorismate synthase from Allorhizobium ampelinum (strain ATCC BAA-846 / DSM 112012 / S4) (Agrobacterium vitis (strain S4)).